The primary structure comprises 361 residues: Eukaryotic translation initiation factor 3 subunit F (361 aa).

Residues 1–86 (MATPAVPVSA…PAPALPGPAL (86 aa)) form a disordered region. Position 2 is an N-acetylalanine (Ala2). 2 stretches are compositionally biased toward pro residues: residues 9–20 (SAPPATPAPVPA) and 30–40 (VPAPTPAPAAA). The span at 41 to 78 (PVPAAAPASSSDPAAAAATTAAPGQTPASAQAPAQTPA) shows a compositional bias: low complexity. Position 50 is a phosphoserine; by CDK11; in vitro (Ser50). An MPN domain is found at 96-226 (VRLHPVILAS…IKAYVSTLMG (131 aa)). An N6-acetyllysine modification is found at Lys242. Phosphoserine is present on Ser262.

This sequence belongs to the eIF-3 subunit F family. In terms of assembly, component of the eukaryotic translation initiation factor 3 (eIF-3) complex, which is composed of 13 subunits: EIF3A, EIF3B, EIF3C, EIF3D, EIF3E, EIF3F, EIF3G, EIF3H, EIF3I, EIF3J, EIF3K, EIF3L and EIF3M. The eIF-3 complex appears to include 3 stable modules: module A is composed of EIF3A, EIF3B, EIF3G and EIF3I; module B is composed of EIF3F, EIF3H, and EIF3M; and module C is composed of EIF3C, EIF3D, EIF3E, EIF3K and EIF3L. EIF3C of module C binds EIF3B of module A and EIF3H of module B, thereby linking the three modules. EIF3J is a labile subunit that binds to the eIF-3 complex via EIF3B. The eIF-3 complex interacts with RPS6KB1 under conditions of nutrient depletion. Mitogenic stimulation leads to binding and activation of a complex composed of MTOR and RPTOR, leading to phosphorylation and release of RPS6KB1 and binding of EIF4B to eIF-3. Interacts with RNF139; the interaction leads to protein translation inhibitions in a ubiquitination-dependent manner. Interacts with DTX1, the interaction is required for deubiquitinating activity towards NOTCH1. Post-translationally, phosphorylation is enhanced upon serum stimulation. Phosphorylated during apoptosis by caspase-processed CDK11.

The protein resides in the cytoplasm. It catalyses the reaction Thiol-dependent hydrolysis of ester, thioester, amide, peptide and isopeptide bonds formed by the C-terminal Gly of ubiquitin (a 76-residue protein attached to proteins as an intracellular targeting signal).. Its function is as follows. Component of the eukaryotic translation initiation factor 3 (eIF-3) complex, which is required for several steps in the initiation of protein synthesis. The eIF-3 complex associates with the 40S ribosome and facilitates the recruitment of eIF-1, eIF-1A, eIF-2:GTP:methionyl-tRNAi and eIF-5 to form the 43S pre-initiation complex (43S PIC). The eIF-3 complex stimulates mRNA recruitment to the 43S PIC and scanning of the mRNA for AUG recognition. The eIF-3 complex is also required for disassembly and recycling of post-termination ribosomal complexes and subsequently prevents premature joining of the 40S and 60S ribosomal subunits prior to initiation. The eIF-3 complex specifically targets and initiates translation of a subset of mRNAs involved in cell proliferation, including cell cycling, differentiation and apoptosis, and uses different modes of RNA stem-loop binding to exert either translational activation or repression. In terms of biological role, deubiquitinates activated NOTCH1, promoting its nuclear import, thereby acting as a positive regulator of Notch signaling. This chain is Eukaryotic translation initiation factor 3 subunit F, found in Pan troglodytes (Chimpanzee).